Consider the following 469-residue polypeptide: Sulfate adenylyltransferase subunit 1 (469 aa).

Positions 22–236 (KDMLRFLTCG…TLENIEIGND (215 aa)) constitute a tr-type G domain. A G1 region spans residues 31–38 (GSVDDGKS). 31-38 (GSVDDGKS) serves as a coordination point for GTP. The G2 stretch occupies residues 89-93 (GITID). A G3 region spans residues 110–113 (DTPG). GTP-binding positions include 110 to 114 (DTPGH) and 165 to 168 (NKMD). The G4 stretch occupies residues 165-168 (NKMD). Residues 202–204 (SAL) are G5.

Belongs to the TRAFAC class translation factor GTPase superfamily. Classic translation factor GTPase family. CysN/NodQ subfamily. In terms of assembly, heterodimer composed of CysD, the smaller subunit, and CysN.

It carries out the reaction sulfate + ATP + H(+) = adenosine 5'-phosphosulfate + diphosphate. It participates in sulfur metabolism; hydrogen sulfide biosynthesis; sulfite from sulfate: step 1/3. In terms of biological role, with CysD forms the ATP sulfurylase (ATPS) that catalyzes the adenylation of sulfate producing adenosine 5'-phosphosulfate (APS) and diphosphate, the first enzymatic step in sulfur assimilation pathway. APS synthesis involves the formation of a high-energy phosphoric-sulfuric acid anhydride bond driven by GTP hydrolysis by CysN coupled to ATP hydrolysis by CysD. The sequence is that of Sulfate adenylyltransferase subunit 1 from Pseudoalteromonas atlantica (strain T6c / ATCC BAA-1087).